Consider the following 66-residue polypeptide: U10-theraphotoxin-Cg1a 1 (66 aa).

Positions 1-21 are cleaved as a signal peptide; it reads MKTSVLFVIFGLALLFCLSFA. Positions 22-29 are excised as a propeptide; it reads AELEDTGR. Intrachain disulfides connect Cys-31–Cys-46, Cys-38–Cys-51, and Cys-45–Cys-58.

The protein belongs to the neurotoxin 10 (Hwtx-1) family. 29 (Jztx-13) subfamily. Expressed by the venom gland.

It localises to the secreted. Functionally, probable ion channel inhibitor. The sequence is that of U10-theraphotoxin-Cg1a 1 from Chilobrachys guangxiensis (Chinese earth tiger tarantula).